The chain runs to 309 residues: MFGRHSIIPNNQIGTASASAGEDHVSASATSGHIPYDDMEEIPHPDSIYGAASDLIPDGSQLVAHRSDGSELLVSRPPEGANQLTISFRGQVYVFDAVGADKVDAVLSLLGGSTELAPGPQVMELAQQQNHMPVVEYQSRCSLPQRAQSLDRFRKKRNARCFEKKVRYGVRQEVALRMARNKGQFTSSKMTDGAYNSGTDQDSAQDDAHPEISCTHCGISSKCTPMMRRGPSGPRTLCNACGLFWANRGTLRDLSKKTEENQLALMKPDDGGSVADAANNLNTEAASVEEHTSMVSLANGDNSNLLGDH.

Residues 1 to 35 (MFGRHSIIPNNQIGTASASAGEDHVSASATSGHIP) form a disordered region. The segment covering 8-18 (IPNNQIGTASA) has biased composition (polar residues). Residues 77-112 (PPEGANQLTISFRGQVYVFDAVGADKVDAVLSLLGG) form the Tify domain. One can recognise a CCT domain in the interval 146–188 (RAQSLDRFRKKRNARCFEKKVRYGVRQEVALRMARNKGQFTSS). The span at 187–202 (SSKMTDGAYNSGTDQD) shows a compositional bias: polar residues. The segment at 187–207 (SSKMTDGAYNSGTDQDSAQDD) is disordered. The segment at 208–267 (AHPEISCTHCGISSKCTPMMRRGPSGPRTLCNACGLFWANRGTLRDLSKKTEENQLALMK) adopts a GATA-type zinc-finger fold. The disordered stretch occupies residues 290–309 (EHTSMVSLANGDNSNLLGDH). Polar residues predominate over residues 293 to 309 (SMVSLANGDNSNLLGDH).

The protein belongs to the type IV zinc-finger family. Class C subfamily. As to expression, predominantly expressed in shoot apices, inflorescences and roots.

The protein resides in the nucleus. Transcriptional activator that specifically binds 5'-GATA-3' or 5'-GAT-3' motifs within gene promoters. The protein is GATA transcription factor 25 (GATA25) of Arabidopsis thaliana (Mouse-ear cress).